The sequence spans 149 residues: Urease accessory protein UreE (149 aa).

It belongs to the UreE family.

The protein localises to the cytoplasm. In terms of biological role, involved in urease metallocenter assembly. Binds nickel. Probably functions as a nickel donor during metallocenter assembly. This chain is Urease accessory protein UreE, found in Ureaplasma urealyticum serovar 10 (strain ATCC 33699 / Western).